A 155-amino-acid polypeptide reads, in one-letter code: Anaerobic ribonucleoside-triphosphate reductase-activating protein (155 aa).

3 residues coordinate [4Fe-4S] cluster: Cys26, Cys30, and Cys33. S-adenosyl-L-methionine-binding positions include 32–34 (GCY) and Gly74.

This sequence belongs to the organic radical-activating enzymes family. Forms a tetramer composed of two NrdD and two NrdG subunits. [4Fe-4S] cluster is required as a cofactor.

It is found in the cytoplasm. The catalysed reaction is glycyl-[protein] + reduced [flavodoxin] + S-adenosyl-L-methionine = glycin-2-yl radical-[protein] + semiquinone [flavodoxin] + 5'-deoxyadenosine + L-methionine + H(+). Functionally, activation of anaerobic ribonucleoside-triphosphate reductase under anaerobic conditions by generation of an organic free radical, using S-adenosylmethionine and reduced flavodoxin as cosubstrates to produce 5'-deoxy-adenosine. The polypeptide is Anaerobic ribonucleoside-triphosphate reductase-activating protein (nrdG) (Haemophilus influenzae (strain ATCC 51907 / DSM 11121 / KW20 / Rd)).